The sequence spans 277 residues: Sulfur carrier protein FdhD (277 aa).

Cys-121 (cysteine persulfide intermediate) is an active-site residue. 260–265 (FCKPGR) provides a ligand contact to Mo-bis(molybdopterin guanine dinucleotide).

The protein belongs to the FdhD family.

Its subcellular location is the cytoplasm. In terms of biological role, required for formate dehydrogenase (FDH) activity. Acts as a sulfur carrier protein that transfers sulfur from IscS to the molybdenum cofactor prior to its insertion into FDH. This Shigella dysenteriae serotype 1 (strain Sd197) protein is Sulfur carrier protein FdhD.